A 338-amino-acid chain; its full sequence is MYG1 protein YER156C (338 aa).

The protein belongs to the MYG1 family.

In Saccharomyces cerevisiae (strain ATCC 204508 / S288c) (Baker's yeast), this protein is MYG1 protein YER156C.